Reading from the N-terminus, the 210-residue chain is Molybdenum cofactor guanylyltransferase (210 aa).

GTP is bound by residues 14-16, Lys27, Asn55, Asp73, and Asp108; that span reads LAG. A Mg(2+)-binding site is contributed by Asp108.

Belongs to the MobA family. In terms of assembly, monomer. Mg(2+) serves as cofactor.

It localises to the cytoplasm. The enzyme catalyses Mo-molybdopterin + GTP + H(+) = Mo-molybdopterin guanine dinucleotide + diphosphate. Functionally, transfers a GMP moiety from GTP to Mo-molybdopterin (Mo-MPT) cofactor (Moco or molybdenum cofactor) to form Mo-molybdopterin guanine dinucleotide (Mo-MGD) cofactor. The protein is Molybdenum cofactor guanylyltransferase of Rhodopseudomonas palustris (strain BisB5).